Consider the following 372-residue polypeptide: Ligninase LG6 (372 aa).

Positions 1–21 are cleaved as a signal peptide; it reads MALKQLAAAVALALSIQAAQG. A propeptide spanning residues 22–28 is cleaved from the precursor; it reads AAVKEKR. 2 cysteine pairs are disulfide-bonded: C31-C43 and C62-C148. The Proton acceptor role is filled by H75. Ca(2+) is bound by residues D76, G94, D96, and S98. H204 is a binding site for heme b. S205, D222, T224, V227, and D229 together coordinate Ca(2+). An intrachain disulfide couples C277 to C345. A glycan (N-linked (GlcNAc...) asparagine) is linked at N285. Over residues 352–361 the composition is skewed to low complexity; the sequence is TLTTLPGPET. The segment at 352–372 is disordered; that stretch reads TLTTLPGPETSVQRIQPPPGA.

The protein belongs to the peroxidase family. Ligninase subfamily. The cofactor is heme b. Ca(2+) serves as cofactor.

The enzyme catalyses 1-(3,4-dimethoxyphenyl)-2-(2-methoxyphenoxy)propane-1,3-diol + H2O2 = 3,4-dimethoxybenzaldehyde + guaiacol + glycolaldehyde + H2O. The catalysed reaction is 2 (3,4-dimethoxyphenyl)methanol + H2O2 = 2 (3,4-dimethoxyphenyl)methanol radical + 2 H2O. It functions in the pathway secondary metabolite metabolism; lignin degradation. Depolymerization of lignin. Catalyzes the C(alpha)-C(beta) cleavage of the propyl side chains of lignin. This is Ligninase LG6 (GLG6) from Phanerodontia chrysosporium (White-rot fungus).